Here is a 332-residue protein sequence, read N- to C-terminus: Probable xyloglucan endotransglucosylase/hydrolase protein 28 (332 aa).

A signal peptide spans 1–22; sequence MGFITRFLVFMSLFTSLVSGFA. Residues 23 to 223 form the GH16 domain; it reads LQKLPLIQFD…YKYAPYVSQF (201 aa). Glu-108 (nucleophile) is an active-site residue. Glu-112 serves as the catalytic Proton donor. Residues Glu-112 and 125–127 contribute to the xyloglucan site; that span reads QTN. Asn-131 carries N-linked (GlcNAc...) asparagine glycosylation. Xyloglucan-binding positions include 135-139, 202-203, Gly-207, and Arg-282; these read HLGRE and KW. The cysteines at positions 277 and 290 are disulfide-linked. A compositionally biased stretch (basic residues) spans 313–326; sequence HGHRRGKHRSRSRL. Residues 313-332 form a disordered region; the sequence is HGHRRGKHRSRSRLARTESI.

The protein belongs to the glycosyl hydrolase 16 family. XTH group 3 subfamily. Post-translationally, contains at least one intrachain disulfide bond essential for its enzymatic activity. In terms of tissue distribution, expressed in 7 day old seedlings, roots, rosette leaves, internodes between nodes bearing axillary shoots, nodes bearing flowers, flower buds and siliques.

The protein localises to the secreted. Its subcellular location is the cell wall. It is found in the extracellular space. It localises to the apoplast. It catalyses the reaction breaks a beta-(1-&gt;4) bond in the backbone of a xyloglucan and transfers the xyloglucanyl segment on to O-4 of the non-reducing terminal glucose residue of an acceptor, which can be a xyloglucan or an oligosaccharide of xyloglucan.. Catalyzes xyloglucan endohydrolysis (XEH) and/or endotransglycosylation (XET). Cleaves and religates xyloglucan polymers, an essential constituent of the primary cell wall, and thereby participates in cell wall construction of growing tissues. The polypeptide is Probable xyloglucan endotransglucosylase/hydrolase protein 28 (XTH28) (Arabidopsis thaliana (Mouse-ear cress)).